Here is a 365-residue protein sequence, read N- to C-terminus: Probable 7-methylxanthine methyltransferase PCS2 (365 aa).

Tyrosine 19 contributes to the S-adenosyl-L-homocysteine binding site. Residue threonine 26 coordinates theobromine. Residues cysteine 62, aspartate 99, leucine 100, serine 134, and phenylalanine 135 each contribute to the S-adenosyl-L-homocysteine site. Theobromine contacts are provided by tyrosine 152, histidine 155, and tryptophan 156. Asparagine 173 contacts Mg(2+). Theobromine is bound at residue arginine 221. Positions 259, 261, and 262 each coordinate Mg(2+).

The protein belongs to the methyltransferase superfamily. Type-7 methyltransferase family. Mg(2+) is required as a cofactor.

It catalyses the reaction 7-methylxanthine + S-adenosyl-L-methionine = theobromine + S-adenosyl-L-homocysteine + H(+). Functionally, no detectable N-methyltransferase activity. This chain is Probable 7-methylxanthine methyltransferase PCS2, found in Camellia ptilophylla (Cocoa tea).